We begin with the raw amino-acid sequence, 166 residues long: Interferon gamma (166 aa).

Positions 1 to 23 are cleaved as a signal peptide; that stretch reads MKYTSYFLALQLCLLLGFSGSYG. Gln-24 carries the post-translational modification Pyrrolidone carboxylic acid. Residues Asn-39 and Asn-106 are each glycosylated (N-linked (GlcNAc...) asparagine).

It belongs to the type II (or gamma) interferon family. As to quaternary structure, homodimer. Interacts with IFNGR1 (via extracellular domain); this interaction promotes IFNGR1 dimerization. In terms of tissue distribution, released primarily from activated T lymphocytes.

It localises to the secreted. Functionally, type II interferon produced by immune cells such as T-cells and NK cells that plays crucial roles in antimicrobial, antiviral, and antitumor responses by activating effector immune cells and enhancing antigen presentation. Primarily signals through the JAK-STAT pathway after interaction with its receptor IFNGR1 to affect gene regulation. Upon IFNG binding, IFNGR1 intracellular domain opens out to allow association of downstream signaling components JAK2, JAK1 and STAT1, leading to STAT1 activation, nuclear translocation and transcription of IFNG-regulated genes. Many of the induced genes are transcription factors such as IRF1 that are able to further drive regulation of a next wave of transcription. Plays a role in class I antigen presentation pathway by inducing a replacement of catalytic proteasome subunits with immunoproteasome subunits. In turn, increases the quantity, quality, and repertoire of peptides for class I MHC loading. Increases the efficiency of peptide generation also by inducing the expression of activator PA28 that associates with the proteasome and alters its proteolytic cleavage preference. Up-regulates as well MHC II complexes on the cell surface by promoting expression of several key molecules such as cathepsins B/CTSB, H/CTSH, and L/CTSL. Participates in the regulation of hematopoietic stem cells during development and under homeostatic conditions by affecting their development, quiescence, and differentiation. This chain is Interferon gamma (IFNG), found in Moschus berezovskii (Chinese forest musk deer).